Here is a 269-residue protein sequence, read N- to C-terminus: 5'-nucleotidase SurE (269 aa).

4 residues coordinate a divalent metal cation: Asp8, Asp9, Ser40, and Asn93.

This sequence belongs to the SurE nucleotidase family. The cofactor is a divalent metal cation.

The protein localises to the cytoplasm. The catalysed reaction is a ribonucleoside 5'-phosphate + H2O = a ribonucleoside + phosphate. Nucleotidase that shows phosphatase activity on nucleoside 5'-monophosphates. This chain is 5'-nucleotidase SurE, found in Caulobacter sp. (strain K31).